Consider the following 411-residue polypeptide: Probable glutamate dehydrogenase 3 (411 aa).

Lysine 102 is a catalytic residue.

The protein belongs to the Glu/Leu/Phe/Val dehydrogenases family.

The catalysed reaction is L-glutamate + NAD(+) + H2O = 2-oxoglutarate + NH4(+) + NADH + H(+). It catalyses the reaction L-glutamate + NADP(+) + H2O = 2-oxoglutarate + NH4(+) + NADPH + H(+). This is Probable glutamate dehydrogenase 3 (GSH3) from Arabidopsis thaliana (Mouse-ear cress).